The sequence spans 363 residues: MLLAYTVRPSNWSFTRRAYSATARAFNQQKGLLPLPIKETVDMAYDLHLPERSVIGKMPYHSPEPIIFYHGLLGSKRNYRHDCKKLATALQTPVYTVDIRNHGSSEHALPFDYNTLVNDLVHFAETHSLGKVNLVGYSLGAKVAMLACLKHPERFSAACIIDNSPEEQPHIKPLLTALVKSCVKLLDHHNVRADDKLWRHKASEALKKYIPDAGIRYYLLSNIINNPRVVEYRSPVINYDDGMLHFKNPVRHMMDFVTKEVAAWPTQELEGKQFLGPVNFIKATRSDFINPKSLQAINQYFPYHNIDEINATHFILNERPQEYLRAVTDFFKVTRYQLEKKREQDLAKIDQLNASESLKSARD.

The transit peptide at 1 to 19 (MLLAYTVRPSNWSFTRRAY) directs the protein to the mitochondrion. The 100-residue stretch at 65 to 164 (PIIFYHGLLG…FSAACIIDNS (100 aa)) folds into the AB hydrolase-1 domain. Residues Ser-138, Asp-162, and His-313 each act as charge relay system in the active site.

Belongs to the AB hydrolase superfamily.

Its subcellular location is the mitochondrion. The catalysed reaction is ethanol + acetyl-CoA = ethyl acetate + CoA. The enzyme catalyses acetyl-CoA + H2O = acetate + CoA + H(+). It catalyses the reaction ethyl acetate + H2O = ethanol + acetate + H(+). Functionally, alcohol acetyltransferase that catalyzes the synthesis of ethyl acetate from ethanol and acetyl-CoA. Can also function as a thioesterase by hydrolyzing acetyl-CoA in the absence of ethanol, as well as esterase hydrolyzing ethyl acetate. The sequence is that of Ethanol acetyltransferase 1 (EAT1) from Kluyveromyces marxianus (strain DMKU3-1042 / BCC 29191 / NBRC 104275) (Yeast).